A 333-amino-acid polypeptide reads, in one-letter code: Tetraacyldisaccharide 4'-kinase (333 aa).

60–67 (TVGGTGKT) provides a ligand contact to ATP.

The protein belongs to the LpxK family.

The catalysed reaction is a lipid A disaccharide + ATP = a lipid IVA + ADP + H(+). It participates in glycolipid biosynthesis; lipid IV(A) biosynthesis; lipid IV(A) from (3R)-3-hydroxytetradecanoyl-[acyl-carrier-protein] and UDP-N-acetyl-alpha-D-glucosamine: step 6/6. Functionally, transfers the gamma-phosphate of ATP to the 4'-position of a tetraacyldisaccharide 1-phosphate intermediate (termed DS-1-P) to form tetraacyldisaccharide 1,4'-bis-phosphate (lipid IVA). The sequence is that of Tetraacyldisaccharide 4'-kinase from Pseudomonas putida (strain ATCC 700007 / DSM 6899 / JCM 31910 / BCRC 17059 / LMG 24140 / F1).